A 390-amino-acid polypeptide reads, in one-letter code: GTPase Obg (390 aa).

In terms of domain architecture, Obg spans 1–159; the sequence is MKFIDEALIR…RDLQLELMLL (159 aa). Residues 160–333 enclose the OBG-type G domain; that stretch reads ADVGMLGLPN…LCRDIMDFIE (174 aa). Residues 166–173, 191–195, 213–216, 283–286, and 314–316 contribute to the GTP site; these read GLPNAGKS, FTTLV, DIPG, NKID, and SAV. Ser-173 and Thr-193 together coordinate Mg(2+). The tract at residues 363–390 is disordered; it reads DHQFEDEDEDWDDWSEEDEEGVETIYKP. Positions 366–384 are enriched in acidic residues; that stretch reads FEDEDEDWDDWSEEDEEGV.

The protein belongs to the TRAFAC class OBG-HflX-like GTPase superfamily. OBG GTPase family. In terms of assembly, monomer. Mg(2+) serves as cofactor.

The protein localises to the cytoplasm. Functionally, an essential GTPase which binds GTP, GDP and possibly (p)ppGpp with moderate affinity, with high nucleotide exchange rates and a fairly low GTP hydrolysis rate. Plays a role in control of the cell cycle, stress response, ribosome biogenesis and in those bacteria that undergo differentiation, in morphogenesis control. This is GTPase Obg from Pasteurella multocida (strain Pm70).